Consider the following 365-residue polypeptide: Nicotinate N-methyltransferase 1 (365 aa).

Asp-232 provides a ligand contact to S-adenosyl-L-methionine.

This sequence belongs to the class I-like SAM-binding methyltransferase superfamily. Cation-independent O-methyltransferase family.

It carries out the reaction nicotinate + S-adenosyl-L-methionine = N-methylnicotinate + S-adenosyl-L-homocysteine. Functionally, involved in nicotinate detoxification in planta. Catalyzes the conversion of nicotinate to N-methylnicotinate, which is a detoxified form of endogenous nicotinate in planta. This Oryza sativa subsp. japonica (Rice) protein is Nicotinate N-methyltransferase 1.